Here is a 1358-residue protein sequence, read N- to C-terminus: Tenascin-R (1358 aa).

The signal sequence occupies residues 1–31 (MGADGETVVLKNMLIGINLILLGSMIKPSEC). O-linked (GalNAc...) threonine glycans are attached at residues T36 and T37. N55 carries N-linked (GlcNAc...) asparagine glycosylation. Residues 127 to 157 (CASSAQVLQELLSRIEMLEREVSVLRDQCNA) are a coiled coil. O-linked (Xyl...) (chondroitin sulfate) serine glycosylation occurs at S176. 2 N-linked (GlcNAc...) asparagine glycosylation sites follow: N180 and N198. EGF-like domains follow at residues 188–199 (CICNEGWFGKNC), 219–230 (CICDSEYSGDDC), and 250–261 (CVCEEPYTGEDC). The O-linked (Xyl...) (chondroitin sulfate) serine glycan is linked to S271. N278 is a glycosylation site (N-linked (GlcNAc...) asparagine). In terms of domain architecture, EGF-like 4 spans 281–292 (CLCEEGYVGEDC). 3 cysteine pairs are disulfide-bonded: C292–C301, C297–C312, and C314–C323. O-linked (Xyl...) (chondroitin sulfate) serine glycosylation is present at S302. Residues 312–323 (CVCEEGYQGPDC) enclose the EGF-like 5 domain. 9 consecutive Fibronectin type-III domains span residues 328–420 (PPED…TPQG), 421–505 (LQFK…TVID), 506–595 (GPTQ…TEID), 596–687 (APKN…TELD), 688–777 (SPRD…FRPI), 778–865 (SHLH…TGID), 866–955 (PPKD…AMDN), 956–1042 (PVDL…TLLD), and 1043–1130 (PPAN…TGGR). 3 N-linked (GlcNAc...) asparagine glycosylation sites follow: N392, N470, and N581. S724 carries the post-translational modification Phosphoserine. N-linked (GlcNAc...) asparagine glycosylation is found at N791, N874, N1036, N1046, and N1261. In terms of domain architecture, Fibrinogen C-terminal spans 1129 to 1344 (GRVFPHPQDC…FVEMKMRPYN (216 aa)).

Belongs to the tenascin family. In terms of assembly, forms oligomers. Interacts with CNTN1, TNC, and FN1. Interacts with BCAN and ACAN in a calcium-dependent manner. Interacts with SCN2B, PTPRZ1, and CSPG3. Contains N-linked oligosaccharides, O-linked sialylated structures and O-linked chondroitin sulfate glycosaminoglycans. Contains N-linked oligosaccharides with a sulfated carbohydrate structure. O-glycosylated on Thr-36 or Thr-37 with a core 1 or possibly core 8 glycan. In terms of tissue distribution, brain specific.

Its subcellular location is the secreted. It localises to the extracellular space. The protein resides in the extracellular matrix. Its function is as follows. Neural extracellular matrix (ECM) protein involved in interactions with different cells and matrix components. These interactions can influence cellular behavior by either evoking a stable adhesion and differentiation, or repulsion and inhibition of neurite growth. Binding to cell surface gangliosides inhibits RGD-dependent integrin-mediated cell adhesion and results in an inhibition of PTK2/FAK1 (FAK) phosphorylation and cell detachment. Binding to membrane surface sulfatides results in a oligodendrocyte adhesion and differentiation. Interaction with CNTN1 induces a repulsion of neurons and an inhibition of neurite outgrowth. Interacts with SCN2B may play a crucial role in clustering and regulation of activity of sodium channels at nodes of Ranvier. TNR-linked chondroitin sulfate glycosaminoglycans are involved in the interaction with FN1 and mediate inhibition of cell adhesion and neurite outgrowth. The highly regulated addition of sulfated carbohydrate structure may modulate the adhesive properties of TNR over the course of development and during synapse maintenance. This chain is Tenascin-R (TNR), found in Homo sapiens (Human).